Reading from the N-terminus, the 312-residue chain is Porphobilinogen deaminase (312 aa).

S-(dipyrrolylmethanemethyl)cysteine is present on Cys243.

Belongs to the HMBS family. As to quaternary structure, monomer. The cofactor is dipyrromethane.

It catalyses the reaction 4 porphobilinogen + H2O = hydroxymethylbilane + 4 NH4(+). It participates in porphyrin-containing compound metabolism; protoporphyrin-IX biosynthesis; coproporphyrinogen-III from 5-aminolevulinate: step 2/4. In terms of biological role, tetrapolymerization of the monopyrrole PBG into the hydroxymethylbilane pre-uroporphyrinogen in several discrete steps. The polypeptide is Porphobilinogen deaminase (Vibrio campbellii (strain ATCC BAA-1116)).